We begin with the raw amino-acid sequence, 644 residues long: Exoribonuclease 2 (644 aa).

The RNB domain occupies 189-516 (REDLTALDFV…NHRLLKAVIK (328 aa)). The S1 motif domain occupies 561–643 (DTRFAAEIVD…ETRSIIARPV (83 aa)).

This sequence belongs to the RNR ribonuclease family. RNase II subfamily.

It localises to the cytoplasm. The catalysed reaction is Exonucleolytic cleavage in the 3'- to 5'-direction to yield nucleoside 5'-phosphates.. Involved in mRNA degradation. Hydrolyzes single-stranded polyribonucleotides processively in the 3' to 5' direction. The polypeptide is Exoribonuclease 2 (Shigella dysenteriae serotype 1 (strain Sd197)).